A 793-amino-acid polypeptide reads, in one-letter code: MDDFERRRELRRQKREEMRLEAERIAYQRNDDDEEEAARERRRRARQERLRQKQEEESLGQVTDQVEVNAQNSVPDEEAKTTTTNTQVEGDDEAAFLERLARREERRQKRLQEALERQKEFDPTITDASLSLPSRRMQNDTAENETTEKEEKSESRQERYEIEETETVTKSYQKNDWRDAEENKKEDKEKEEEEEEKPKRGSIGENQVEVMVEEKTTESQEETVVMSLKNGQISSEEPKQEEEREQGSDEISHHEKMEEEDKERAEAERARLEAEERERIKAEQDKKIADERARIEAEEKAAAQERERREAEERERMREEEKRAAEERQRIKEEEKRAAEERQRIKEEEKRAAEERQRIKEEEKRAAEERQRARAEEEEKAKVEEQKRNKQLEEKKHAMQETKIKGEKVEQKIEGKWVNEKKAQEDKLQTAVLKKQGEEKGTKVQAKREKLQEDKPTFKKEEIKDEKIKKDKEPKEEVKSFMDRKKGFTEVKSQNGEFMTHKLKHTENTFSRPGGRASVDTKEAEGAPQVEAGKRLEELRRRRGETESEEFEKLKQKQQEAALELEELKKKREERRKVLEEEEQRRKQEEADRKLREEEEKRRLKEEIERRRAEAAEKRQKMPEDGLSDDKKPFKCFTPKGSSLKIEERAEFLNKSVQKSSGVKSTHQAAIVSKIDSRLEQYTSAIEGTKSAKPTKPAASDLPVPAEGVRNIKSMWEKGNVFSSPTAAGTPNKETAGLKVGVSSRINEWLTKTPDGNKSPAPKPSDLRPGDVSSKRNLWEKQSVDKVTSPTKV.

Arg12 is modified (phosphoserine). Phosphotyrosine is present on Glu21. Disordered stretches follow at residues 26 to 94 (AYQR…DDEA), 108 to 407 (QKRL…IKGE), and 434 to 458 (KKQGEEKGTKVQAKREKLQEDKPTF). Residues 26 to 207 (AYQRNDDDEE…PKRGSIGENQ (182 aa)) are myosin and calmodulin-binding. The span at 47–56 (QERLRQKQEE) shows a compositional bias: basic and acidic residues. The span at 60–74 (GQVTDQVEVNAQNSV) shows a compositional bias: polar residues. Over residues 108–122 (QKRLQEALERQKEFD) the composition is skewed to basic and acidic residues. Ser129 is modified (phosphoserine). Composition is skewed to basic and acidic residues over residues 146-162 (TTEKEEKSESRQERYEI) and 173-188 (QKNDWRDAEENKKEDK). Residues Glu196 and Ser202 each carry the phosphoserine modification. Residues Ile203 and Glu209 each participate in a glycyl lysine isopeptide (Lys-Gly) (interchain with G-Cter in SUMO2) cross-link. Composition is skewed to basic and acidic residues over residues 236–407 (EEPK…IKGE) and 435–458 (KQGEEKGTKVQAKREKLQEDKPTF). Tandem repeats lie at residues 319–332 (EEEKRAAEERQRIK), 333–346 (EEEKRAAEERQRIK), and 347–360 (EEEKRAAEERQRIK). Residues 319–375 (EEEKRAAEERQRIKEEEKRAAEERQRIKEEEKRAAEERQRIKEEEKRAAEERQRARA) form a 3 X 14 AA tandem repeats of E-E-E-K-R-A-A-E-E-R-Q-R-I-K region. Lys459 is covalently cross-linked (Glycyl lysine isopeptide (Lys-Gly) (interchain with G-Cter in SUMO2)). The disordered stretch occupies residues 492-640 (KSQNGEFMTH…KKPFKCFTPK (149 aa)). Composition is skewed to basic and acidic residues over residues 532–558 (AGKRLEELRRRRGETESEEFEKLKQKQ) and 566–633 (EELK…DKKP). Positions 564 to 621 (ELEELKKKREERRKVLEEEEQRRKQEEADRKLREEEEKRRLKEEIERRRAEAAEKRQK) are tropomyosin-binding. Ser643 bears the Phosphoserine mark. A Glycyl lysine isopeptide (Lys-Gly) (interchain with G-Cter in SUMO2) cross-link involves residue Lys645. Residues 653–686 (LNKSVQKSSGVKSTHQAAIVSKIDSRLEQYTSAI) are strong actin-binding. At Ser656 the chain carries Phosphoserine. The tropomyosin-binding stretch occupies residues 664–674 (KSTHQAAIVSK). 3 disordered regions span residues 687-706 (EGTKSAKPTKPAASDLPVPA), 721-740 (VFSSPTAAGTPNKETAGLKV), and 747-793 (NEWL…PTKV). The tract at residues 716-722 (WEKGNVF) is calmodulin-binding. The span at 721 to 733 (VFSSPTAAGTPNK) shows a compositional bias: polar residues. Ser724 bears the Phosphoserine mark. Residues Thr730 and Thr753 each carry the phosphothreonine modification. Ser759 is modified (phosphoserine). Positions 765–784 (SDLRPGDVSSKRNLWEKQSV) are enriched in basic and acidic residues. Residues 768 to 793 (RPGDVSSKRNLWEKQSVDKVTSPTKV) form a weak actin-binding region. Ser789 carries the phosphoserine modification.

It belongs to the caldesmon family. In non-muscle cells, phosphorylation by CDK1 during mitosis causes caldesmon to dissociate from microfilaments. Phosphorylation reduces caldesmon binding to actin, myosin, and calmodulin as well as its inhibition of actomyosin ATPase activity. Phosphorylation also occurs in both quiescent and dividing smooth muscle cells with similar effects on the interaction with actin and calmodulin and on microfilaments reorganization. CDK1-mediated phosphorylation promotes Schwann cell migration during peripheral nerve regeneration. In terms of tissue distribution, high-molecular-weight caldesmon (isoform 1) is predominantly expressed in smooth muscles, whereas low-molecular-weight caldesmon (isoforms 2, 3, 4 and 5) are widely distributed in non-muscle tissues and cells. Not expressed in skeletal muscle or heart.

It localises to the cytoplasm. It is found in the cytoskeleton. Its subcellular location is the myofibril. The protein localises to the stress fiber. In terms of biological role, actin- and myosin-binding protein implicated in the regulation of actomyosin interactions in smooth muscle and nonmuscle cells (could act as a bridge between myosin and actin filaments). Stimulates actin binding of tropomyosin which increases the stabilization of actin filament structure. In muscle tissues, inhibits the actomyosin ATPase by binding to F-actin. This inhibition is attenuated by calcium-calmodulin and is potentiated by tropomyosin. Interacts with actin, myosin, two molecules of tropomyosin and with calmodulin. Also plays an essential role during cellular mitosis and receptor capping. Involved in Schwann cell migration during peripheral nerve regeneration. This chain is Caldesmon (CALD1), found in Homo sapiens (Human).